A 209-amino-acid chain; its full sequence is Imidazole glycerol phosphate synthase subunit HisH (209 aa).

Residues 1-205 (MIAIIDYGMG…QGVVEAWKSS (205 aa)) enclose the Glutamine amidotransferase type-1 domain. Cysteine 79 (nucleophile) is an active-site residue. Active-site residues include histidine 180 and glutamate 182.

As to quaternary structure, heterodimer of HisH and HisF.

It localises to the cytoplasm. The enzyme catalyses 5-[(5-phospho-1-deoxy-D-ribulos-1-ylimino)methylamino]-1-(5-phospho-beta-D-ribosyl)imidazole-4-carboxamide + L-glutamine = D-erythro-1-(imidazol-4-yl)glycerol 3-phosphate + 5-amino-1-(5-phospho-beta-D-ribosyl)imidazole-4-carboxamide + L-glutamate + H(+). It carries out the reaction L-glutamine + H2O = L-glutamate + NH4(+). Its pathway is amino-acid biosynthesis; L-histidine biosynthesis; L-histidine from 5-phospho-alpha-D-ribose 1-diphosphate: step 5/9. Functionally, IGPS catalyzes the conversion of PRFAR and glutamine to IGP, AICAR and glutamate. The HisH subunit catalyzes the hydrolysis of glutamine to glutamate and ammonia as part of the synthesis of IGP and AICAR. The resulting ammonia molecule is channeled to the active site of HisF. The protein is Imidazole glycerol phosphate synthase subunit HisH of Bacillus cereus (strain B4264).